The primary structure comprises 65 residues: Large ribosomal subunit protein bL35 (65 aa).

The tract at residues 1–25 (MPKMKSHRGAAKRFKKTGTGKLKRA) is disordered.

It belongs to the bacterial ribosomal protein bL35 family.

The polypeptide is Large ribosomal subunit protein bL35 (Clostridium botulinum (strain Eklund 17B / Type B)).